The chain runs to 327 residues: GTPase Obg (327 aa).

Residues 1–159 (MKFVDSARIV…LKVDLELKLM (159 aa)) enclose the Obg domain. Residues 120–145 (GGDGGRGNPHFTTSTRQAPRYAEPGG) are disordered. An OBG-type G domain is found at 160–323 (ADVGLVGFPN…LRNALWNTIN (164 aa)). GTP contacts are provided by residues 166–173 (GFPNAGKS), 191–195 (FTTLV), 213–216 (DIPG), 280–283 (TKMD), and 304–306 (SSI). S173 and T193 together coordinate Mg(2+).

The protein belongs to the TRAFAC class OBG-HflX-like GTPase superfamily. OBG GTPase family. Monomer. The cofactor is Mg(2+).

It localises to the cytoplasm. An essential GTPase which binds GTP, GDP and possibly (p)ppGpp with moderate affinity, with high nucleotide exchange rates and a fairly low GTP hydrolysis rate. Plays a role in control of the cell cycle, stress response, ribosome biogenesis and in those bacteria that undergo differentiation, in morphogenesis control. The chain is GTPase Obg from Prosthecochloris aestuarii (strain DSM 271 / SK 413).